The chain runs to 572 residues: Hexokinase (572 aa).

Residues D49–A492 form the Hexokinase domain. The interval N105–I237 is hexokinase small subdomain. D-glucose 6-phosphate contacts are provided by residues D116–T120 and S185. ATP is bound at residue D116 to N121. Substrate contacts are provided by residues S185–Y186, T202–K203, and N238–D239. Residues N238–D481 are hexokinase large subdomain. D239 and T263 together coordinate D-glucose 6-phosphate. T263 serves as a coordination point for ATP. 3 residues coordinate substrate: N266, E297, and D331. Residues G336 to K337, T373 to S377, and S448 to Y452 contribute to the ATP site. D-glucose 6-phosphate is bound by residues D446–S448 and S483.

Belongs to the hexokinase family.

The enzyme catalyses a D-hexose + ATP = a D-hexose 6-phosphate + ADP + H(+). It carries out the reaction D-mannose + ATP = D-mannose 6-phosphate + ADP + H(+). The catalysed reaction is D-fructose + ATP = D-fructose 6-phosphate + ADP + H(+). It catalyses the reaction D-glucose + ATP = D-glucose 6-phosphate + ADP + H(+). The protein operates within carbohydrate metabolism; hexose metabolism. It participates in carbohydrate degradation; glycolysis; D-glyceraldehyde 3-phosphate and glycerone phosphate from D-glucose: step 1/4. Activated by glucose-6-phosphate. Inhibited by N-acetylglucosamine, glucosamine, mannoheptulose and ADP. Functionally, active against glucose, fructose, mannose, maltose and galactose. The polypeptide is Hexokinase (Brugia malayi (Filarial nematode worm)).